Here is a 789-residue protein sequence, read N- to C-terminus: Probable phosphoketolase 1 (789 aa).

This sequence belongs to the XFP family. Requires thiamine diphosphate as cofactor.

This is Probable phosphoketolase 1 from Rhizobium meliloti (strain 1021) (Ensifer meliloti).